The primary structure comprises 412 residues: Double C2-like domain-containing protein beta (412 aa).

Residues 1–36 form a negatively regulates targeting to plasma membrane region; that stretch reads MTLRRRGEKATISIQEHMAIDVCPGPIRPIKQISDY. Positions 1-90 are mediates interaction with DYNLT1; sequence MTLRRRGEKA…EDVDQLFGAY (90 aa). The interval 38-123 is disordered; the sequence is PRFPRGLPPT…PDVDGYESDD (86 aa). A compositionally biased stretch (pro residues) spans 43 to 58; the sequence is GLPPTAAPRAPAPPDA. Over residues 59–74 the composition is skewed to low complexity; that stretch reads PARSPAASASPRSPSD. Pro residues predominate over residues 95–108; the sequence is GPSPGPSPARPPAK. Positions 112–123 are enriched in acidic residues; the sequence is DEPDVDGYESDD. C2 domains are found at residues 126 to 250 and 266 to 399; these read ALGT…SICL and ERGR…ERWH. Ca(2+) contacts are provided by Asp-157, Asp-163, Asp-218, Asp-220, Asp-297, Asp-303, Asp-357, Asp-359, and Asp-365. Residues 257–375 are mediates interaction with STXBP3; it reads DKAEDKSLEE…FIGGVVLGIN (119 aa). A Phosphoserine modification is found at Ser-411.

As to quaternary structure, interacts with cytoplasmic dynein light chain DYNLT1. May interact with UNC13A; the interaction mediates targeting to the plasma membrane. Probably interacts with the SNARE (soluble N-ethylmaleimide-sensitive factor attached protein receptor) complex composed of SNAP25, STX1A and VAMP2; the interaction is calcium-dependent and competitive with SYT1. Interacts with STX4; the interaction is calcium-dependent, increased by insulin and glucose, and mediates vesicle fusion with plasma membrane in pancreatic cells and adipocytes. Interacts with STXBP3; the interaction is direct, occurs at the cell membrane and regulates glucose-stimulated insulin secretion. It depends on Ca(2+) as a cofactor. Widely expressed. Expressed in pancreatic islet cells (at protein level).

Its subcellular location is the cytoplasm. The protein localises to the cytoplasmic granule. The protein resides in the cell membrane. Calcium sensor which positively regulates SNARE-dependent fusion of vesicles with membranes. Binds phospholipids in a calcium-dependent manner and may act at the priming stage of fusion by modifying membrane curvature to stimulate fusion. Involved in calcium-triggered exocytosis in chromaffin cells and calcium-dependent spontaneous release of neurotransmitter in absence of action potentials in neuronal cells. Involved both in glucose-stimulated insulin secretion in pancreatic cells and insulin-dependent GLUT4 transport to the plasma membrane in adipocytes. This Mus musculus (Mouse) protein is Double C2-like domain-containing protein beta (Doc2b).